The chain runs to 443 residues: Zinc finger protein ZIC 1 (443 aa).

Residues 221-256 (LICKWIEPEQLANPKKSCNKTFSTMHELVTHVTVEH) form a C2H2-type 1; atypical zinc finger. The C2H2-type 2; atypical zinc finger occupies 265 to 292 (HICVWEECPREGKPFKAKYKLINHIRVH). C2H2-type zinc fingers lie at residues 298–322 (FPCPFPGCGKVFARSENLKIHKRTH), 328–352 (FKCEFEGCDRRFANSSDRKKHMHVH), and 358–380 (YLCKMCDKSYTHPSSLRKHMKVH). A disordered region spans residues 371–433 (SSLRKHMKVH…AVHHTSNHST (63 aa)). Over residues 383–396 (SSQGSQPSPAASSG) the composition is skewed to low complexity. Residues 397–413 (YESSTPPTIVSPSAENQ) show a composition bias toward polar residues. Residues 408 to 443 (PSAENQSTSSLSPSSSAVHHTSNHSTLSSNFNEWYV) are negatively regulates transcriptional activity. Positions 414-433 (STSSLSPSSSAVHHTSNHST) are enriched in low complexity.

Belongs to the GLI C2H2-type zinc-finger protein family. During early gastrula stages, widely expressed in the dorsal ectoderm. At mid-gastrula, expressed throughout the presumptive neural plate and at late gastrula, expression gradually diminishes in the dorsal midline and increases in the anterior folds. By early neurula stage, expression becomes restricted to the lateral edges of the neural plate, corresponding to the presumptive dorsal neural plate and neural crest, and in flanking ectoderm. In early tailbud stages (stages 22-23), expressed in the dorsal forebrain, midbrain and hindbrain. Subsequently expressed in the telencephalon and at the diencephalon/mesencephalon boundary. In the spinal cord, expression is restricted to the dorsal most region including the roof plate. Also expressed in the somites but not in eye vesicles. At larval stages, expressed mainly in the dorsal neural tube throughout its anteroposterior axis.

The protein localises to the nucleus. Its subcellular location is the cytoplasm. Its function is as follows. Transcriptional activator that induces expression of multiple genes including pax3, en2, snai2/slug, feb and a subset of wnt genes. Has multiple key roles in the regulation of neural induction and neurogenesis: acts as a neural competence factor, sensitizing the presumptive neuroectoderm to respond to subsequent neuralizing signals. Promotes both preplacodal cell fates and neural crest cell fates, two of the cell populations that arise from the neural plate border. Cooperates with pax3 in concert with wnt signaling to determine neural crest fate. Synergizes with the bmp-inhibitor noggin/nog and acts through the wnt pathway to induce expression of en2. May bind to the minimal GLI-consensus sequence 5'-TGGGTGGTC-3'. This Xenopus laevis (African clawed frog) protein is Zinc finger protein ZIC 1 (zic1).